The following is a 476-amino-acid chain: MSTQRLRNEDYHDYSSTDVSPEESPSEGLNNLSSPGSYQRFGQSNSTTWFQTLIHLLKGNIGTGLLGLPLAVKNAGIVMGPISLLIIGIVAVHCMGILVKCAHHFCRRLNKSFVDYGDTVMYGLESSPCSWLRNHAHWGRRVVDFFLIVTQLGFCCVYFVFLADNFKQVIEAANGTTNNCHNNETVILTPTMDSRLYMLSFLPFLVLLVFIRNLRALSIFSLLANITMLVSLVMIYQFIVQRIPDPSHLPLVAPWKTYPLFFGTAIFSFEGIGMVLPLENKMKDPRKFPLILYLGMVIVTILYISLGCLGYLQFGANIQGSITLNLPNCWLYQSVKLLYSIGIFFTYALQFYVPAEIIIPFFVSRAPEHCELVVDLFVRTVLVCLTCILAILIPRLDLVISLVGSVSSSALALIIPPLLEVTTFYSEGMSPLTIFKDALISILGFVGFVVGTYEALYELIQPSNAPIFINSTCAFI.

The span at 1-15 (MSTQRLRNEDYHDYS) shows a compositional bias: basic and acidic residues. The tract at residues 1-32 (MSTQRLRNEDYHDYSSTDVSPEESPSEGLNNL) is disordered. At 1–51 (MSTQRLRNEDYHDYSSTDVSPEESPSEGLNNLSSPGSYQRFGQSNSTTWFQ) the chain is on the cytoplasmic side. The helical transmembrane segment at 52–72 (TLIHLLKGNIGTGLLGLPLAV) threads the bilayer. Residues 73-78 (KNAGIV) are Extracellular-facing. Residues 79-99 (MGPISLLIIGIVAVHCMGILV) traverse the membrane as a helical segment. At 100-141 (KCAHHFCRRLNKSFVDYGDTVMYGLESSPCSWLRNHAHWGRR) the chain is on the cytoplasmic side. The chain crosses the membrane as a helical span at residues 142–162 (VVDFFLIVTQLGFCCVYFVFL). Over 163–190 (ADNFKQVIEAANGTTNNCHNNETVILTP) the chain is Extracellular. Residues asparagine 174 and asparagine 183 are each glycosylated (N-linked (GlcNAc...) asparagine). Cysteine 180 and cysteine 329 form a disulfide bridge. A helical membrane pass occupies residues 191–211 (TMDSRLYMLSFLPFLVLLVFI). Residues 212 to 215 (RNLR) are Cytoplasmic-facing. The helical transmembrane segment at 216–236 (ALSIFSLLANITMLVSLVMIY) threads the bilayer. Topologically, residues 237–257 (QFIVQRIPDPSHLPLVAPWKT) are extracellular. The chain crosses the membrane as a helical span at residues 258–278 (YPLFFGTAIFSFEGIGMVLPL). Residues 279-289 (ENKMKDPRKFP) are Cytoplasmic-facing. The chain crosses the membrane as a helical span at residues 290-310 (LILYLGMVIVTILYISLGCLG). Over 311–342 (YLQFGANIQGSITLNLPNCWLYQSVKLLYSIG) the chain is Extracellular. Residues 343–363 (IFFTYALQFYVPAEIIIPFFV) traverse the membrane as a helical segment. Over 364–372 (SRAPEHCEL) the chain is Cytoplasmic. The chain crosses the membrane as a helical span at residues 373-393 (VVDLFVRTVLVCLTCILAILI). Over 394–397 (PRLD) the chain is Extracellular. The helical transmembrane segment at 398 to 418 (LVISLVGSVSSSALALIIPPL) threads the bilayer. The Cytoplasmic segment spans residues 419-439 (LEVTTFYSEGMSPLTIFKDAL). Residues 440–460 (ISILGFVGFVVGTYEALYELI) form a helical membrane-spanning segment. At 461 to 476 (QPSNAPIFINSTCAFI) the chain is on the extracellular side. Asparagine 470 carries an N-linked (GlcNAc...) asparagine glycan.

It belongs to the amino acid/polyamine transporter 2 family.

The protein resides in the cell membrane. The protein localises to the apical cell membrane. It localises to the lysosome membrane. It catalyses the reaction glycine(in) + H(+)(in) = glycine(out) + H(+)(out). It carries out the reaction L-alanine(in) + H(+)(in) = L-alanine(out) + H(+)(out). The enzyme catalyses D-alanine(in) + H(+)(in) = D-alanine(out) + H(+)(out). The catalysed reaction is L-proline(out) + H(+)(out) = L-proline(in) + H(+)(in). It catalyses the reaction D-proline(out) + H(+)(out) = D-proline(in) + H(+)(in). It carries out the reaction D-serine(out) + H(+)(out) = D-serine(in) + H(+)(in). The enzyme catalyses L-serine(in) + H(+)(in) = L-serine(out) + H(+)(out). The catalysed reaction is 4-aminobutanoate(in) + H(+)(in) = 4-aminobutanoate(out) + H(+)(out). It catalyses the reaction beta-alanine(in) + H(+)(in) = beta-alanine(out) + H(+)(out). Electrogenic proton/amino acid symporter with selectivity for small apolar L-amino acids, their D-enantiomers and selected amino acid derivatives such as 4-aminobutanoate/GABA. May be involved in the efflux from the lysosomal compartment of neutral amino acids resulting from proteolysis. May play a role in specifying sites for exocytosis in neurons. The polypeptide is Proton-coupled amino acid transporter 1 (Homo sapiens (Human)).